The primary structure comprises 443 residues: Postreplication repair E3 ubiquitin-protein ligase rad18 (443 aa).

The RING-type zinc-finger motif lies at 30-68 (CQVCKDFFDNPVITSCSHTFCSLCIRRCLSTEGKCPTCR). The tract at residues 106–157 (GTDDSGDLAAEEPASKKRKIEPNAIVGTDGLPEEGIRTRSQSRGASRQPQAT) is disordered. Residues 143–157 (TRSQSRGASRQPQAT) are compositionally biased toward polar residues. The UBZ4-type zinc finger occupies 175–202 (LVPCPVCGRRMKEEAVFRHLDSCTGTAE). Residues C178, C181, H193, and C197 each contribute to the Zn(2+) site. The region spanning 239-273 (LKDTVLRKKLKDLGIPNWGPRALLQRRHTEWLNLW) is the SAP domain. Composition is skewed to polar residues over residues 350–363 (IPNASQANSDTPRS) and 431–443 (PISSSASTHKTPH). Residues 350–443 (IPNASQANSD…SSASTHKTPH (94 aa)) are disordered.

This sequence belongs to the RAD18 family. As to quaternary structure, interacts with E2 UBC2, forming a complex with ubiquitin ligase activity.

It localises to the nucleus. The catalysed reaction is S-ubiquitinyl-[E2 ubiquitin-conjugating enzyme]-L-cysteine + [acceptor protein]-L-lysine = [E2 ubiquitin-conjugating enzyme]-L-cysteine + N(6)-ubiquitinyl-[acceptor protein]-L-lysine.. It participates in protein modification; protein ubiquitination. E3 RING-finger protein, member of the UBC2/RAD6 epistasis group. Associates to the E2 ubiquitin conjugating enzyme UBC2/RAD6 to form the UBC2-RAD18 ubiquitin ligase complex involved in postreplicative repair (PRR) of damaged DNA. The protein is Postreplication repair E3 ubiquitin-protein ligase rad18 (uvsH) of Emericella nidulans (strain FGSC A4 / ATCC 38163 / CBS 112.46 / NRRL 194 / M139) (Aspergillus nidulans).